The sequence spans 457 residues: D(1B) dopamine receptor (457 aa).

Residues 1–41 lie on the Extracellular side of the membrane; the sequence is MYQPFQHLDSDQVASWQSPEMLMNKSVSRESQRRKELVAGQ. N24 carries N-linked (GlcNAc...) asparagine glycosylation. Residues 42-67 form a helical membrane-spanning segment; the sequence is IVTGSLLLLLIFWTLFGNILVCTAVM. The Cytoplasmic segment spans residues 68–78; the sequence is RFRHLRSRVTN. Residues 79-105 form a helical membrane-spanning segment; it reads IFIVSLAVSDLLVALLVMPWKAVAEVA. Topologically, residues 106-114 are extracellular; it reads GHWPFGAFC. An intrachain disulfide couples C114 to C199. A helical membrane pass occupies residues 115-137; the sequence is DIWVAFDIMCSTASILNLCVISV. Residues 138–156 are Cytoplasmic-facing; it reads DRYWAISSPFRYERKMTQR. A helical transmembrane segment spans residues 157–181; the sequence is VALLMISTAWALSVLISFIPVQLSW. Topologically, residues 182 to 205 are extracellular; sequence HKSETEDHLLSNHSTGNCDSSLNR. A helical membrane pass occupies residues 206 to 231; sequence TYAISSSLISFYIPVAIMIVTYTRIY. The Cytoplasmic portion of the chain corresponds to 232–282; sequence RIAQIQIKRISTLERAAEHAQSCRSNRVDSCSRHHQTSLRTSIKKETKVLK. A helical membrane pass occupies residues 283–309; sequence TLSIIMGVFVCCWLPFFILNCMVPFCD. The Extracellular segment spans residues 310–326; it reads RSPGHPQAGLPCVSETT. Residues 327–351 traverse the membrane as a helical segment; sequence FDIFVWFGWANSSLNPIIYAFNADF. Residues 352 to 457 lie on the Cytoplasmic side of the membrane; it reads RKVFSSLLGC…ITPSMSNGIH (106 aa). C361 carries the S-palmitoyl cysteine lipid modification.

Belongs to the G-protein coupled receptor 1 family. In terms of tissue distribution, brain and kidney.

The protein resides in the cell membrane. In terms of biological role, dopamine receptor whose activity is mediated by G proteins which activate adenylyl cyclase. The polypeptide is D(1B) dopamine receptor (drd5) (Xenopus laevis (African clawed frog)).